A 215-amino-acid polypeptide reads, in one-letter code: MOB kinase activator-like 1B (215 aa).

The interval 1 to 29 (MSLFGLGSRNQKTFRPKKSAPTGSKGAQL) is disordered. Zn(2+) is bound by residues C80, C85, H162, and H167.

The protein belongs to the MOB1/phocein family. In terms of tissue distribution, constitutively expressed with higher expression in roots, flowers and pods than in leaves and stems.

It is found in the cytoplasm. Its subcellular location is the cytoskeleton. The protein resides in the phragmoplast. The sequence is that of MOB kinase activator-like 1B from Medicago sativa subsp. falcata (Sickle medic).